The sequence spans 408 residues: Peptidase T (408 aa).

H78 contributes to the Zn(2+) binding site. The active site involves D80. D141 is a Zn(2+) binding site. The Proton acceptor role is filled by E175. The Zn(2+) site is built by E176, D198, and H380.

It belongs to the peptidase M20B family. Requires Zn(2+) as cofactor.

The protein resides in the cytoplasm. The enzyme catalyses Release of the N-terminal residue from a tripeptide.. Cleaves the N-terminal amino acid of tripeptides. The polypeptide is Peptidase T (Clostridium botulinum (strain ATCC 19397 / Type A)).